Reading from the N-terminus, the 510-residue chain is Solute carrier family 2, facilitated glucose transporter member 2 (510 aa).

Residues Met-1–Leu-10 are Cytoplasmic-facing. A helical transmembrane segment spans residues Val-11–Ile-31. At Asn-32–Ser-96 the chain is on the extracellular side. N-linked (GlcNAc...) asparagine glycosylation is present at Asn-62. Residues Leu-97–Gly-117 form a helical membrane-spanning segment. Residues Asp-118–Arg-122 lie on the Cytoplasmic side of the membrane. Residues Ile-123–Ser-143 form a helical membrane-spanning segment. Topologically, residues Lys-144–Gly-157 are extracellular. Residues Ile-158 to Ala-178 traverse the membrane as a helical segment. Topologically, residues Pro-179–Gln-191 are cytoplasmic. Gln-191 is a binding site for D-glucose. The chain crosses the membrane as a helical span at residues Leu-192 to Asn-212. Residues His-213–Leu-215 lie on the Extracellular side of the membrane. The chain crosses the membrane as a helical span at residues Trp-216–Phe-236. The Cytoplasmic segment spans residues Cys-237 to Pro-301. Residues Ile-302 to Tyr-322 form a helical membrane-spanning segment. Residues Gln-312–Gln-313 and Asn-318 contribute to the D-glucose site. The Extracellular portion of the chain corresponds to Tyr-323 to Pro-336. The chain crosses the membrane as a helical span at residues Val-337–Leu-357. Asn-347 provides a ligand contact to D-glucose. Residues Val-358–Ser-365 are Cytoplasmic-facing. Residues Leu-366–Val-386 traverse the membrane as a helical segment. At Leu-387–Thr-400 the chain is on the extracellular side. The helical transmembrane segment at Ala-401–Val-421 threads the bilayer. 2 residues coordinate D-glucose: Glu-410 and Trp-418. The Cytoplasmic portion of the chain corresponds to Ala-422–Pro-431. The chain crosses the membrane as a helical span at residues Ala-432–Phe-452. At Gln-453 to Tyr-454 the chain is on the extracellular side. A helical membrane pass occupies residues Ile-455 to Phe-475. The Cytoplasmic portion of the chain corresponds to Cys-476 to Leu-510. The tract at residues Leu-490–Leu-510 is disordered.

The protein belongs to the major facilitator superfamily. Sugar transporter (TC 2.A.1.1) family. Glucose transporter subfamily. Post-translationally, N-glycosylated; required for stability and retention at the cell surface of pancreatic beta cells.

Its subcellular location is the cell membrane. The enzyme catalyses D-glucose(out) = D-glucose(in). It carries out the reaction D-fructose(out) = D-fructose(in). It catalyses the reaction L-dehydroascorbate(out) = L-dehydroascorbate(in). The catalysed reaction is D-galactose(in) = D-galactose(out). With respect to regulation, D-glucose and maltose competitively inhibit fructose transport. D-glucose, D-fructose and maltose inhibit deoxyglucose transport. Its function is as follows. Facilitative hexose transporter that mediates the transport of glucose, fructose and galactose. Likely mediates the bidirectional transfer of glucose across the plasma membrane of hepatocytes and is responsible for uptake of glucose by the beta cells; may comprise part of the glucose-sensing mechanism of the beta cell. May also participate with the Na(+)/glucose cotransporter in the transcellular transport of glucose in the small intestine and kidney. Also able to mediate the transport of dehydroascorbate. This chain is Solute carrier family 2, facilitated glucose transporter member 2, found in Bos taurus (Bovine).